A 235-amino-acid chain; its full sequence is Small ribosomal subunit protein uS10m (235 aa).

Residues 1 to 19 constitute a mitochondrion transit peptide; sequence MLRTSVRSPLLYRCLSKRF.

The protein belongs to the universal ribosomal protein uS10 family. As to quaternary structure, part of the mitochondrial small ribosomal subunit.

Its subcellular location is the mitochondrion. Involved in mitochondrial genome encoded proteins translation. Involved in the binding of tRNA to the ribosomes. The protein is Small ribosomal subunit protein uS10m (RSM10) of Candida glabrata (strain ATCC 2001 / BCRC 20586 / JCM 3761 / NBRC 0622 / NRRL Y-65 / CBS 138) (Yeast).